A 66-amino-acid polypeptide reads, in one-letter code: Large ribosomal subunit protein bL35 (66 aa).

This sequence belongs to the bacterial ribosomal protein bL35 family.

This is Large ribosomal subunit protein bL35 from Azorhizobium caulinodans (strain ATCC 43989 / DSM 5975 / JCM 20966 / LMG 6465 / NBRC 14845 / NCIMB 13405 / ORS 571).